The primary structure comprises 204 residues: Urease accessory protein UreG (204 aa).

Residue 12–19 (GPVGSGKT) coordinates GTP.

It belongs to the SIMIBI class G3E GTPase family. UreG subfamily. Homodimer. UreD, UreF and UreG form a complex that acts as a GTP-hydrolysis-dependent molecular chaperone, activating the urease apoprotein by helping to assemble the nickel containing metallocenter of UreC. The UreE protein probably delivers the nickel.

It is found in the cytoplasm. Its function is as follows. Facilitates the functional incorporation of the urease nickel metallocenter. This process requires GTP hydrolysis, probably effectuated by UreG. The chain is Urease accessory protein UreG from Streptococcus salivarius (strain 57.I).